Reading from the N-terminus, the 110-residue chain is UPF0060 membrane protein Pnap_4944 (110 aa).

The next 4 membrane-spanning stretches (helical) occupy residues 8-28, 33-53, 65-85, and 88-108; these read ILFA…WLVL, SLLL…LLTL, YGGM…GIAL, and WDLS…MQPS.

The protein belongs to the UPF0060 family.

The protein resides in the cell inner membrane. The polypeptide is UPF0060 membrane protein Pnap_4944 (Polaromonas naphthalenivorans (strain CJ2)).